We begin with the raw amino-acid sequence, 224 residues long: tRNA (guanine-N(7)-)-methyltransferase (224 aa).

Residues E54, E79, E106, and D129 each contribute to the S-adenosyl-L-methionine site. D129 is a catalytic residue. 2 residues coordinate substrate: K133 and D165.

The protein belongs to the class I-like SAM-binding methyltransferase superfamily. TrmB family.

The catalysed reaction is guanosine(46) in tRNA + S-adenosyl-L-methionine = N(7)-methylguanosine(46) in tRNA + S-adenosyl-L-homocysteine. It participates in tRNA modification; N(7)-methylguanine-tRNA biosynthesis. Functionally, catalyzes the formation of N(7)-methylguanine at position 46 (m7G46) in tRNA. This chain is tRNA (guanine-N(7)-)-methyltransferase, found in Chlamydia abortus (strain DSM 27085 / S26/3) (Chlamydophila abortus).